A 163-amino-acid polypeptide reads, in one-letter code: uncharacterized protein (163 aa).

This is an uncharacterized protein from Drosophila melanogaster (Fruit fly).